The chain runs to 862 residues: uncharacterized protein (862 aa).

The signal sequence occupies residues 1–25 (MKPRPYSVFLFLHIVFYSLLSAVNG). Over 26–61 (SPSLDYFETCSNFVPRAGIPTFSPYAVIKNFDEVNR) the chain is Lumenal. The chain crosses the membrane as a helical span at residues 62 to 82 (MYYIQVVGNLSGVITIVGGNG). The Cytoplasmic portion of the chain corresponds to 83–187 (SHIHAASVYS…STTLYYFYPV (105 aa)). Residues 188 to 208 (ISYLVVVSLAYVSFSIIYALF) traverse the membrane as a helical segment. Residues 209–230 (LNPWTGSLDPFKSIFNFNMDPD) are Lumenal-facing. The chain crosses the membrane as a helical span at residues 231–250 (ALRLTSLGFFDFVQYLQFAV). Residues 251 to 256 (STAQVS) are Cytoplasmic-facing. The helical transmembrane segment at 257 to 277 (VMFPKFYINIMAALSWGTALF) threads the bilayer. Topologically, residues 278–329 (RFPIFSEPAEYQFADFADLSVASSSYADYLPKSYGMYSFLDSIGIGTACWLP) are lumenal. The helical transmembrane segment at 330-350 (FLIVMVIYLFAALFVALLVIF) threads the bilayer. At 351–372 (LKWLMSRIFNETIAETRWDTWS) the chain is on the cytoplasmic side. The helical transmembrane segment at 373 to 393 (FIAGSLIRLYFLTYFPTVAYM) threads the bilayer. Residues 394–404 (SFQFVAPPTGY) lie on the Lumenal side of the membrane. A helical membrane pass occupies residues 405 to 425 (EIIPVLWFIFFGIFIPVYLYM). Residues 426–457 (NLAFVEPSSKLLEDQTYLHLFGSIYNSFREER) are Cytoplasmic-facing. The helical transmembrane segment at 458-480 (VMFWIFPIAVQFMRGITVGVIGS) threads the bilayer. Residues 481-483 (SGS) are Lumenal-facing. The chain crosses the membrane as a helical span at residues 484–503 (AQLAIFFILEVANVVAYAYV). Residues 504-514 (RPHFPQTSMNT) are Cytoplasmic-facing. The chain crosses the membrane as a helical span at residues 515–535 (LNTFISTMRLITVILMIPLDP). Residues 536-545 (RLKVLGISRD) are Lumenal-facing. A helical membrane pass occupies residues 546-566 (LLAYAILFIHIMVCILFLLLS). At 567–862 (TQRFMEVSAR…AESAWSIPHP (296 aa)) the chain is on the cytoplasmic side. Residues 668 to 686 (QASSLVPSKNNTASSSSLM) are compositionally biased toward polar residues. Disordered stretches follow at residues 668–717 (QASS…SVRK) and 815–862 (VLRS…IPHP). Residues 689–700 (SPVTPSSPYSTS) are compositionally biased toward low complexity. Basic and acidic residues predominate over residues 834–850 (EPSRDEQYSMERKKTDD).

This sequence belongs to the transient receptor potential (TRP) ion channel family.

The protein resides in the cytoplasm. It is found in the golgi apparatus membrane. This is an uncharacterized protein from Schizosaccharomyces pombe (strain 972 / ATCC 24843) (Fission yeast).